A 687-amino-acid chain; its full sequence is Polyphosphate kinase (687 aa).

ATP is bound at residue N45. The Mg(2+) site is built by R375 and R405. H435 (phosphohistidine intermediate) is an active-site residue. ATP contacts are provided by Y472, R568, and H596.

The protein belongs to the polyphosphate kinase 1 (PPK1) family. Requires Mg(2+) as cofactor. Post-translationally, an intermediate of this reaction is the autophosphorylated ppk in which a phosphate is covalently linked to a histidine residue through a N-P bond.

It catalyses the reaction [phosphate](n) + ATP = [phosphate](n+1) + ADP. Catalyzes the reversible transfer of the terminal phosphate of ATP to form a long-chain polyphosphate (polyP). The chain is Polyphosphate kinase from Burkholderia cenocepacia (strain HI2424).